Reading from the N-terminus, the 547-residue chain is Chaperonin GroEL (547 aa).

Residues 30–33 (TLGP), Lys51, 87–91 (DGTTT), Gly415, and Asp496 contribute to the ATP site.

This sequence belongs to the chaperonin (HSP60) family. Forms a cylinder of 14 subunits composed of two heptameric rings stacked back-to-back. Interacts with the co-chaperonin GroES.

The protein resides in the cytoplasm. The enzyme catalyses ATP + H2O + a folded polypeptide = ADP + phosphate + an unfolded polypeptide.. Its function is as follows. Together with its co-chaperonin GroES, plays an essential role in assisting protein folding. The GroEL-GroES system forms a nano-cage that allows encapsulation of the non-native substrate proteins and provides a physical environment optimized to promote and accelerate protein folding. In Histophilus somni (strain 129Pt) (Haemophilus somnus), this protein is Chaperonin GroEL.